The primary structure comprises 224 residues: 7-cyano-7-deazaguanine synthase (224 aa).

Leu7 to Leu17 provides a ligand contact to ATP. Positions 191, 199, 202, and 205 each coordinate Zn(2+).

Belongs to the QueC family. It depends on Zn(2+) as a cofactor.

The catalysed reaction is 7-carboxy-7-deazaguanine + NH4(+) + ATP = 7-cyano-7-deazaguanine + ADP + phosphate + H2O + H(+). The protein operates within purine metabolism; 7-cyano-7-deazaguanine biosynthesis. In terms of biological role, catalyzes the ATP-dependent conversion of 7-carboxy-7-deazaguanine (CDG) to 7-cyano-7-deazaguanine (preQ(0)). In Nostoc punctiforme (strain ATCC 29133 / PCC 73102), this protein is 7-cyano-7-deazaguanine synthase.